We begin with the raw amino-acid sequence, 303 residues long: 1-phosphofructokinase (303 aa).

Residue glycine 248 to aspartate 249 coordinates ATP. The active-site Proton acceptor is the aspartate 249.

This sequence belongs to the carbohydrate kinase PfkB family.

The catalysed reaction is beta-D-fructose 1-phosphate + ATP = beta-D-fructose 1,6-bisphosphate + ADP + H(+). Catalyzes the ATP-dependent phosphorylation of fructose-l-phosphate to fructose-l,6-bisphosphate. The polypeptide is 1-phosphofructokinase (fruK) (Bacillus subtilis (strain 168)).